The following is a 104-amino-acid chain: Pyrimidine/purine nucleoside phosphorylase (104 aa).

This sequence belongs to the nucleoside phosphorylase PpnP family.

The catalysed reaction is a purine D-ribonucleoside + phosphate = a purine nucleobase + alpha-D-ribose 1-phosphate. It carries out the reaction adenosine + phosphate = alpha-D-ribose 1-phosphate + adenine. It catalyses the reaction cytidine + phosphate = cytosine + alpha-D-ribose 1-phosphate. The enzyme catalyses guanosine + phosphate = alpha-D-ribose 1-phosphate + guanine. The catalysed reaction is inosine + phosphate = alpha-D-ribose 1-phosphate + hypoxanthine. It carries out the reaction thymidine + phosphate = 2-deoxy-alpha-D-ribose 1-phosphate + thymine. It catalyses the reaction uridine + phosphate = alpha-D-ribose 1-phosphate + uracil. The enzyme catalyses xanthosine + phosphate = alpha-D-ribose 1-phosphate + xanthine. Its function is as follows. Catalyzes the phosphorolysis of diverse nucleosides, yielding D-ribose 1-phosphate and the respective free bases. Can use uridine, adenosine, guanosine, cytidine, thymidine, inosine and xanthosine as substrates. Also catalyzes the reverse reactions. The polypeptide is Pyrimidine/purine nucleoside phosphorylase (Trichlorobacter lovleyi (strain ATCC BAA-1151 / DSM 17278 / SZ) (Geobacter lovleyi)).